The sequence spans 150 residues: uncharacterized protein (150 aa).

5 consecutive repeat copies span residues 101–105, 106–110, 111–115, 116–120, and 121–125. The interval 101–125 is 5 X 5 AA tandem repeats of [FH]-H-[EK]-[IV]-N; that stretch reads FHEVNHHEVNHHKINHHEVNHHKIN.

The protein belongs to the asfivirus D129L family.

This is an uncharacterized protein from African swine fever virus (isolate Tick/Malawi/Lil 20-1/1983) (ASFV).